Here is a 447-residue protein sequence, read N- to C-terminus: Tubulin beta-2 chain (447 aa).

Residues Q11, E69, S138, G142, T143, G144, N204, and N226 each coordinate GTP. Residue E69 coordinates Mg(2+). The tract at residues 426-447 is disordered; the sequence is QDAGVDEEEEEYEDDAPLEEEV. Residues 429–447 show a composition bias toward acidic residues; the sequence is GVDEEEEEYEDDAPLEEEV.

The protein belongs to the tubulin family. In terms of assembly, dimer of alpha and beta chains. A typical microtubule is a hollow water-filled tube with an outer diameter of 25 nm and an inner diameter of 15 nM. Alpha-beta heterodimers associate head-to-tail to form protofilaments running lengthwise along the microtubule wall with the beta-tubulin subunit facing the microtubule plus end conferring a structural polarity. Microtubules usually have 13 protofilaments but different protofilament numbers can be found in some organisms and specialized cells. Mg(2+) serves as cofactor.

It localises to the cytoplasm. The protein resides in the cytoskeleton. In terms of biological role, tubulin is the major constituent of microtubules, a cylinder consisting of laterally associated linear protofilaments composed of alpha- and beta-tubulin heterodimers. Microtubules grow by the addition of GTP-tubulin dimers to the microtubule end, where a stabilizing cap forms. Below the cap, tubulin dimers are in GDP-bound state, owing to GTPase activity of alpha-tubulin. In Colletotrichum graminicola (Maize anthracnose fungus), this protein is Tubulin beta-2 chain (TUB2).